The chain runs to 457 residues: tRNA modification GTPase MnmE (457 aa).

The (6S)-5-formyl-5,6,7,8-tetrahydrofolate site is built by Arg-22, Glu-83, and Arg-122. A TrmE-type G domain is found at 219-378 (GLATAIIGRP…LEEAIKALFF (160 aa)). Asn-229 is a binding site for K(+). GTP is bound by residues 229 to 234 (NVGKSS), 248 to 254 (TDIAGTT), and 273 to 276 (DTAG). Ser-233 is a binding site for Mg(2+). K(+) is bound by residues Thr-248, Ile-250, and Thr-253. Position 254 (Thr-254) interacts with Mg(2+). Lys-457 contributes to the (6S)-5-formyl-5,6,7,8-tetrahydrofolate binding site.

The protein belongs to the TRAFAC class TrmE-Era-EngA-EngB-Septin-like GTPase superfamily. TrmE GTPase family. In terms of assembly, homodimer. Heterotetramer of two MnmE and two MnmG subunits. It depends on K(+) as a cofactor.

The protein localises to the cytoplasm. Functionally, exhibits a very high intrinsic GTPase hydrolysis rate. Involved in the addition of a carboxymethylaminomethyl (cmnm) group at the wobble position (U34) of certain tRNAs, forming tRNA-cmnm(5)s(2)U34. This Listeria innocua serovar 6a (strain ATCC BAA-680 / CLIP 11262) protein is tRNA modification GTPase MnmE.